The sequence spans 281 residues: Light-independent protochlorophyllide reductase iron-sulfur ATP-binding protein (281 aa).

ATP contacts are provided by residues 10–15 (GIGKST) and K39. S14 provides a ligand contact to Mg(2+). Residues C95 and C129 each contribute to the [4Fe-4S] cluster site. Position 180-181 (180-181 (NR)) interacts with ATP.

It belongs to the NifH/BchL/ChlL family. In terms of assembly, homodimer. Protochlorophyllide reductase is composed of three subunits; ChlL, ChlN and ChlB. Requires [4Fe-4S] cluster as cofactor.

It catalyses the reaction chlorophyllide a + oxidized 2[4Fe-4S]-[ferredoxin] + 2 ADP + 2 phosphate = protochlorophyllide a + reduced 2[4Fe-4S]-[ferredoxin] + 2 ATP + 2 H2O. It functions in the pathway porphyrin-containing compound metabolism; chlorophyll biosynthesis (light-independent). In terms of biological role, component of the dark-operative protochlorophyllide reductase (DPOR) that uses Mg-ATP and reduced ferredoxin to reduce ring D of protochlorophyllide (Pchlide) to form chlorophyllide a (Chlide). This reaction is light-independent. The L component serves as a unique electron donor to the NB-component of the complex, and binds Mg-ATP. This Thermosynechococcus vestitus (strain NIES-2133 / IAM M-273 / BP-1) protein is Light-independent protochlorophyllide reductase iron-sulfur ATP-binding protein.